The chain runs to 351 residues: Modulator of apoptosis 1 (351 aa).

The LIR signature appears at Y49 to L52. A BH3-like region spans residues L120–E127. Residues K202–R205 form an RASSF1-binding region.

The protein belongs to the PNMA family. Homodimer. Under normal circumstances, held in an inactive conformation by an intramolecular interaction. Interacts with BAX. Binding to RASSF1 isoform A (RASSF1A) relieves this inhibitory interaction and allows further binding to BAX. Also binds to BCL2 and BCLX. Recruited to the TNFRSF1A and TNFRSF10A complexes in response to their respective cognate ligand, after internalization. Interacts with TRIM39. Interacts with RASSF6. Interacts with ATG8 proteins MAP1LC3A, MAP1LC3B and MAP1LC3C. Does not interact with ATG8 proteins GABARAPL1, GABARAPL2 and GABARAP. Interacts with SQSTM1; promoting dissociation of SQSTM1 inclusion bodies that sequester KEAP1. Ubiquitinated and degraded during mitotic exit by APC/C-Cdh1, this modification is inhibited by TRIM39. In terms of tissue distribution, widely expressed, with high levels in heart and brain.

It is found in the cytoplasm. The protein resides in the cytosol. The protein localises to the mitochondrion outer membrane. It localises to the extracellular vesicle membrane. Its function is as follows. Retrotransposon-derived protein that forms virion-like capsids. Acts as an effector of BAX during apoptosis: enriched at outer mitochondria membrane and associates with BAX upon induction of apoptosis, facilitating BAX-dependent mitochondrial outer membrane permeabilization and apoptosis. Required for death receptor-dependent apoptosis. When associated with RASSF1, promotes BAX conformational change and translocation to mitochondrial membranes in response to TNF and TNFSF10 stimulation. Also promotes autophagy: promotes phagophore closure via association with ATG8 proteins. Acts as an inhibitor of the NFE2L2/NRF2 pathway via interaction with SQSTM1: interaction promotes dissociation of SQSTM1 inclusion bodies that sequester KEAP1, relieving inactivation of the BCR(KEAP1) complex. This chain is Modulator of apoptosis 1, found in Homo sapiens (Human).